The following is a 439-amino-acid chain: Serine/threonine-protein kinase 2 (439 aa).

One can recognise a Protein kinase domain in the interval 87–439; the sequence is NDDFYHISTG…IFSDWINGGN (353 aa). ATP-binding positions include 93–101 and K117; that span reads ISTGGYGIV. D307 acts as the Proton acceptor in catalysis.

This sequence belongs to the protein kinase superfamily. Ser/Thr protein kinase family. Poxviruses subfamily. Post-translationally, phosphorylated in vivo. Autophosphorylated in vitro.

It is found in the host endoplasmic reticulum. Its subcellular location is the host endoplasmic reticulum-Golgi intermediate compartment. The catalysed reaction is L-seryl-[protein] + ATP = O-phospho-L-seryl-[protein] + ADP + H(+). The enzyme catalyses L-threonyl-[protein] + ATP = O-phospho-L-threonyl-[protein] + ADP + H(+). Its function is as follows. Essential serine-protein kinase involved in the early stage of virion morphogenesis. The polypeptide is Serine/threonine-protein kinase 2 (OPG054) (Vaccinia virus (strain Copenhagen) (VACV)).